The primary structure comprises 218 residues: Small ribosomal subunit protein uS3 (218 aa).

Residues 43-113 enclose the KH type-2 domain; that stretch reads IREHIERKLA…KVQVNVREVS (71 aa).

The protein belongs to the universal ribosomal protein uS3 family. As to quaternary structure, part of the 30S ribosomal subunit. Forms a tight complex with proteins S10 and S14.

Binds the lower part of the 30S subunit head. Binds mRNA in the 70S ribosome, positioning it for translation. This chain is Small ribosomal subunit protein uS3, found in Rubrobacter xylanophilus (strain DSM 9941 / JCM 11954 / NBRC 16129 / PRD-1).